A 117-amino-acid polypeptide reads, in one-letter code: UPF0642 protein C32H8.05 (117 aa).

Residues 39–117 (DQVNDLTKSS…SNFSKFLKKK (79 aa)) are disordered. Residues 93–106 (KWAKKHLKKGKRAK) are compositionally biased toward basic residues. Low complexity predominate over residues 107 to 117 (NSNFSKFLKKK).

The protein belongs to the UPF0642 family.

It is found in the nucleus. Its subcellular location is the nucleolus. The sequence is that of UPF0642 protein C32H8.05 from Schizosaccharomyces pombe (strain 972 / ATCC 24843) (Fission yeast).